The primary structure comprises 932 residues: DNA mismatch repair protein MutS (932 aa).

Residues 1–13 (MTTDTDTDVDAGT) are compositionally biased toward acidic residues. The tract at residues 1–26 (MTTDTDTDVDAGTDLEPQPEGPPEKM) is disordered. 648 to 655 (GPNMSGKS) contacts ATP. A disordered region spans residues 865–892 (NQQNQASDDDEIARSPRGADTNTDAGIN).

This sequence belongs to the DNA mismatch repair MutS family.

In terms of biological role, this protein is involved in the repair of mismatches in DNA. It is possible that it carries out the mismatch recognition step. This protein has a weak ATPase activity. This chain is DNA mismatch repair protein MutS, found in Haloquadratum walsbyi (strain DSM 16790 / HBSQ001).